The primary structure comprises 352 residues: Blue-sensitive opsin (352 aa).

Residues 1 to 42 lie on the Extracellular side of the membrane; that stretch reads MRGNRLVEFPDDFWIPIPLDTNNVTALSPFLVPQDHLGSPTI. Residue Asn-23 is glycosylated (N-linked (GlcNAc...) asparagine). The helical transmembrane segment at 43 to 67 threads the bilayer; sequence FYSMSALMFVLFVAGTAINLLTIAC. The Cytoplasmic portion of the chain corresponds to 68 to 79; sequence TLQYKKLRSHLN. Residues 80–105 form a helical membrane-spanning segment; sequence YILVNMAVANLIVASTGSSTCFVCFA. Topologically, residues 106–119 are extracellular; it reads FKYMVLGPLGCKIE. An intrachain disulfide couples Cys-116 to Cys-193. A helical membrane pass occupies residues 120 to 139; it reads GFTAALGGMVSLWSLAVIAF. Over 140–158 the chain is Cytoplasmic; sequence ERWLVICKPLGNFVFKSEH. Residues 159-182 form a helical membrane-spanning segment; it reads ALLCCALTWVCGLCASVPPLVGWS. The Extracellular segment spans residues 183-208; the sequence is RYIPEGMQCSCGPDWYTTGNKFNNES. The N-linked (GlcNAc...) asparagine glycan is linked to Asn-206. The helical transmembrane segment at 209 to 236 threads the bilayer; it reads FVMFLFCFCFAVPFSIIVFCYSQLLFTL. Residues 237–258 are Cytoplasmic-facing; it reads KMAAKAQADSASTQKAEKEVTR. Residues 259–282 form a helical membrane-spanning segment; that stretch reads MVVVMVVAFLVCYVPYASFALWVI. At 283–290 the chain is on the extracellular side; it reads NNRGQTFD. A helical membrane pass occupies residues 291-315; the sequence is LRLATIPSCVSKASTVYNPVIYVLL. Lys-302 is subject to N6-(retinylidene)lysine. Residues 316–352 are Cytoplasmic-facing; that stretch reads NKQFRLCMKKMLGMSADEDEESSTSQSTTEVSKVGPS. The tract at residues 332–352 is disordered; sequence DEDEESSTSQSTTEVSKVGPS.

The protein belongs to the G-protein coupled receptor 1 family. Opsin subfamily. In terms of processing, phosphorylated on some or all of the serine and threonine residues present in the C-terminal region. In terms of tissue distribution, the color pigments are found in the cone photoreceptor cells.

The protein localises to the membrane. Functionally, visual pigments are the light-absorbing molecules that mediate vision. They consist of an apoprotein, opsin, covalently linked to cis-retinal. This is Blue-sensitive opsin from Oryzias latipes (Japanese rice fish).